Consider the following 227-residue polypeptide: Ribonuclease 3 (227 aa).

Residues 4–133 enclose the RNase III domain; that stretch reads FEKLETLLGY…LIAAIYLDSN (130 aa). Glu-46 lines the Mg(2+) pocket. Asp-50 is an active-site residue. Mg(2+) contacts are provided by Asn-119 and Glu-122. Glu-122 is an active-site residue. Residues 158 to 226 enclose the DRBM domain; it reads DPKTALQEWA…ARCLLHRLKN (69 aa).

The protein belongs to the ribonuclease III family. As to quaternary structure, homodimer. Mg(2+) serves as cofactor.

The protein resides in the cytoplasm. It carries out the reaction Endonucleolytic cleavage to 5'-phosphomonoester.. In terms of biological role, digests double-stranded RNA. Involved in the processing of primary rRNA transcript to yield the immediate precursors to the large and small rRNAs (23S and 16S). Processes some mRNAs, and tRNAs when they are encoded in the rRNA operon. Processes pre-crRNA and tracrRNA of type II CRISPR loci if present in the organism. In Rickettsia typhi (strain ATCC VR-144 / Wilmington), this protein is Ribonuclease 3.